Here is a 274-residue protein sequence, read N- to C-terminus: NH(3)-dependent NAD(+) synthetase (274 aa).

Residue 46–53 (GISGGQDS) coordinates ATP. Residue Asp52 coordinates Mg(2+). Deamido-NAD(+) is bound at residue Arg140. Thr160 contacts ATP. Glu165 is a Mg(2+) binding site. Positions 173 and 180 each coordinate deamido-NAD(+). Positions 189 and 211 each coordinate ATP. Deamido-NAD(+) is bound at residue 260-261 (HK).

It belongs to the NAD synthetase family. Homodimer.

It catalyses the reaction deamido-NAD(+) + NH4(+) + ATP = AMP + diphosphate + NAD(+) + H(+). Its pathway is cofactor biosynthesis; NAD(+) biosynthesis; NAD(+) from deamido-NAD(+) (ammonia route): step 1/1. Its function is as follows. Catalyzes the ATP-dependent amidation of deamido-NAD to form NAD. Uses ammonia as a nitrogen source. This chain is NH(3)-dependent NAD(+) synthetase, found in Streptococcus pyogenes serotype M2 (strain MGAS10270).